The chain runs to 278 residues: Multidrug-efflux transporter 1 regulator (278 aa).

Positions 5–75 constitute an HTH merR-type domain; it reads YYSIGEVSKL…LEEMKKAQDL (71 aa). A DNA-binding region (H-T-H motif) is located at residues 8–27; that stretch reads IGEVSKLANVSIKALRYYDK.

Binds DNA as a homodimer.

Activates transcription of the bmr gene in response to structurally dissimilar drugs. Binds rhodamine as an inducer. This is Multidrug-efflux transporter 1 regulator (bmrR) from Bacillus subtilis (strain 168).